Reading from the N-terminus, the 815-residue chain is Protein-glutamine gamma-glutamyltransferase K (815 aa).

Disordered stretches follow at residues 1-40 and 59-100; these read MDGPRSDVGRWGGNPWQPPTTPSPEPEPEPEPERRSRRGG and DDWG…AAGD. Residues 16–25 are compositionally biased toward pro residues; it reads WQPPTTPSPE. Phosphothreonine is present on threonine 21. Phosphoserine is present on residues serine 23, serine 80, serine 83, serine 90, and serine 93. Over residues 59 to 87 the composition is skewed to basic and acidic residues; sequence DDWGPEPHRDRGSGSGRRRPDSRGSDSRR. Residues cysteine 375, histidine 434, and aspartate 457 contribute to the active site. The Ca(2+) site is built by asparagine 497, aspartate 499, glutamate 546, and glutamate 551. The disordered stretch occupies residues 795–815; it reads SNAGGNSPLGETIPMASRGGA.

This sequence belongs to the transglutaminase superfamily. Transglutaminase family. In terms of assembly, interacts with PLAAT4. It depends on Ca(2+) as a cofactor. In terms of processing, palmitoylated. The membrane anchorage region possesses a cluster of five cysteines within which fatty acid(s) may become thioester-linked. It is subject to phorbol ester-stimulated phosphorylation and is hypersensitive to proteolysis, which releases the enzyme in a soluble form. Post-translationally, tyrosine-phosphorylated.

It is found in the membrane. The enzyme catalyses L-glutaminyl-[protein] + L-lysyl-[protein] = [protein]-L-lysyl-N(6)-5-L-glutamyl-[protein] + NH4(+). Its function is as follows. Catalyzes the cross-linking of proteins and the conjugation of polyamines to proteins. Responsible for cross-linking epidermal proteins during formation of the stratum corneum. Involved in cell proliferation. In Canis lupus familiaris (Dog), this protein is Protein-glutamine gamma-glutamyltransferase K (TGM1).